A 432-amino-acid polypeptide reads, in one-letter code: Adenylosuccinate synthetase (432 aa).

Residues 13–19 and 41–43 contribute to the GTP site; these read GDEGKGK and GHT. The active-site Proton acceptor is Asp-14. Residues Asp-14 and Gly-41 each coordinate Mg(2+). IMP contacts are provided by residues 14–17, 39–42, Thr-130, Arg-144, Gln-225, Thr-240, and Arg-304; these read DEGK and NAGH. His-42 acts as the Proton donor in catalysis. 300–306 lines the substrate pocket; the sequence is AVTGRPR. GTP contacts are provided by residues Arg-306, 332–334, and 415–417; these read KLD and STG.

Belongs to the adenylosuccinate synthetase family. As to quaternary structure, homodimer. The cofactor is Mg(2+).

It is found in the cytoplasm. The catalysed reaction is IMP + L-aspartate + GTP = N(6)-(1,2-dicarboxyethyl)-AMP + GDP + phosphate + 2 H(+). It functions in the pathway purine metabolism; AMP biosynthesis via de novo pathway; AMP from IMP: step 1/2. In terms of biological role, plays an important role in the de novo pathway of purine nucleotide biosynthesis. Catalyzes the first committed step in the biosynthesis of AMP from IMP. The chain is Adenylosuccinate synthetase from Haemophilus influenzae (strain PittGG).